Here is a 586-residue protein sequence, read N- to C-terminus: Heterogeneous nuclear ribonucleoprotein L (586 aa).

Basic residues predominate over residues 1-16; it reads MSRRLLPRAEKRRRRL. The interval 1–97 is disordered; it reads MSRRLLPRAE…NYDDPHKTPA (97 aa). Residues 17 to 27 are compositionally biased toward basic and acidic residues; it reads EQRQQPDEQLR. Residues 28-37 show a composition bias toward low complexity; that stretch reads RAGAMVKMAA. Positions 38–54 are enriched in gly residues; that stretch reads AGGGGGGGRYYGGGNEG. Residues K59 and K62 each participate in a glycyl lysine isopeptide (Lys-Gly) (interchain with G-Cter in SUMO2) cross-link. Over residues 69–87 the composition is skewed to gly residues; it reads QHGGGGGGGSGAAGGGGGE. Phosphoserine is present on S98. The region spanning 99 to 173 is the RRM 1 domain; it reads PVVHIRGLID…HPAFVNYSTS (75 aa). K133 participates in a covalent cross-link: Glycyl lysine isopeptide (Lys-Gly) (interchain with G-Cter in SUMO2). Residue S182 is modified to Phosphoserine. An RRM 2 domain is found at 190–267; the sequence is SVLLFTILNP…CTLKIEYAKP (78 aa). The residue at position 266 (K266) is an N6-acetyllysine. Positions 281–298 are enriched in polar residues; the sequence is DYTNPNLSGQGDPGSNPN. Residues 281-376 form a disordered region; sequence DYTNPNLSGQ…PPPPDYGPHA (96 aa). S288 and S295 each carry phosphoserine. K299 is covalently cross-linked (Glycyl lysine isopeptide (Lys-Gly) (interchain with G-Cter in SUMO2)). 2 positions are modified to asymmetric dimethylarginine: R351 and R355. Positions 361 to 372 are enriched in pro residues; it reads GHPPPPPPPPDY. S378 is modified (phosphoserine). RRM domains are found at residues 379 to 476 and 492 to 580; these read PVLM…DFSE and RIQH…LCFS. S541 is modified (phosphoserine; by CaMK4). K565 is covalently cross-linked (Glycyl lysine isopeptide (Lys-Gly) (interchain with G-Cter in SUMO2)).

As to quaternary structure, identified in a IGF2BP1-dependent mRNP granule complex containing untranslated mRNAs. Interacts with HNRNPLL. Interacts with APEX1; the interaction is DNA-dependent. Component of a complex with SETD2. Interacts with ELAVL1. Part of a transcription inhibitory ribonucleoprotein complex composed at least of the circular RNA circZNF827, ZNF827 and HNRNPK. Interacts with CHD8 in an RNA-dependent manner. In terms of processing, phosphorylation at Ser-541 by CaMK4 enhances interaction with a CaMK4-responsive RNA element (CaRRE1), and prevents inclusion of the stress axis-regulated exon (STREX) of the KCNMA1 potassium channel transcripts upon membrane depolarization. In terms of tissue distribution, detected in hematopoietic cells, including lymphoid progenitor cells.

The protein resides in the nucleus. The protein localises to the nucleoplasm. It localises to the cytoplasm. Its function is as follows. Splicing factor binding to exonic or intronic sites and acting as either an activator or repressor of exon inclusion. Exhibits a binding preference for CA-rich elements. Component of the heterogeneous nuclear ribonucleoprotein (hnRNP) complexes and associated with most nascent transcripts. Associates, together with APEX1, to the negative calcium responsive element (nCaRE) B2 of the APEX2 promoter. As part of a ribonucleoprotein complex composed at least of ZNF827, HNRNPK and the circular RNA circZNF827 that nucleates the complex on chromatin, may negatively regulate the transcription of genes involved in neuronal differentiation. Regulates alternative splicing of a core group of genes involved in neuronal differentiation, likely by mediating H3K36me3-coupled transcription elongation and co-transcriptional RNA processing via interaction with CHD8. The sequence is that of Heterogeneous nuclear ribonucleoprotein L (Hnrnpl) from Mus musculus (Mouse).